We begin with the raw amino-acid sequence, 304 residues long: Rhomboid-like protein 19 (304 aa).

6 helical membrane-spanning segments follow: residues 23–43 (LVVG…LALI), 58–78 (GYFE…LFMG), 93–113 (FIFV…IALY), 120–140 (VYLY…LVGI), 158–175 (WLPS…FFTL), and 179–198 (AYLP…LRYL). Residues 247-304 (SEDHDYSTSGAPLPGSDSAEASRRRERGARALEERLGTERLVPARNKDELQSDGLDNV) form a disordered region. Residues 266-284 (EASRRRERGARALEERLGT) show a composition bias toward basic and acidic residues.

The protein belongs to the peptidase S54 family.

It localises to the membrane. Functionally, probable rhomboid-type serine protease that catalyzes intramembrane proteolysis. The polypeptide is Rhomboid-like protein 19 (Arabidopsis thaliana (Mouse-ear cress)).